The primary structure comprises 206 residues: Small ribosomal subunit protein uS4 (206 aa).

One can recognise an S4 RNA-binding domain in the interval 96 to 156; that stretch reads TRLDNVVYRM…EKSRTQARIK (61 aa).

Belongs to the universal ribosomal protein uS4 family. In terms of assembly, part of the 30S ribosomal subunit. Contacts protein S5. The interaction surface between S4 and S5 is involved in control of translational fidelity.

In terms of biological role, one of the primary rRNA binding proteins, it binds directly to 16S rRNA where it nucleates assembly of the body of the 30S subunit. With S5 and S12 plays an important role in translational accuracy. This Shewanella baltica (strain OS223) protein is Small ribosomal subunit protein uS4.